The chain runs to 594 residues: Aspartate--tRNA(Asp/Asn) ligase (594 aa).

An L-aspartate-binding site is contributed by glutamate 176. The tract at residues 200 to 203 (QIFK) is aspartate. Arginine 222 contributes to the L-aspartate binding site. ATP is bound by residues 222 to 224 (RDE) and glutamine 231. Histidine 450 lines the L-aspartate pocket. ATP is bound at residue glutamate 484. Arginine 491 lines the L-aspartate pocket. 536 to 539 (GLDR) is a binding site for ATP.

It belongs to the class-II aminoacyl-tRNA synthetase family. Type 1 subfamily. Homodimer.

It is found in the cytoplasm. The catalysed reaction is tRNA(Asx) + L-aspartate + ATP = L-aspartyl-tRNA(Asx) + AMP + diphosphate. Its function is as follows. Aspartyl-tRNA synthetase with relaxed tRNA specificity since it is able to aspartylate not only its cognate tRNA(Asp) but also tRNA(Asn). Reaction proceeds in two steps: L-aspartate is first activated by ATP to form Asp-AMP and then transferred to the acceptor end of tRNA(Asp/Asn). This is Aspartate--tRNA(Asp/Asn) ligase from Geobacillus sp. (strain WCH70).